A 250-amino-acid chain; its full sequence is UPF0259 membrane protein Spro_2675 (250 aa).

The next 6 membrane-spanning stretches (helical) occupy residues 23 to 43, 87 to 107, 132 to 152, 156 to 176, 192 to 212, and 222 to 242; these read ILMLALLTAFISVLLNQAFSP, AATFSALVGNVLLVGGMLTLI, LLLLLFICTLLIQLGLTLFVV, IMAIAFSLAPVITATDKKGVF, VIVPAMMLWLAAKLLVLFMVS, and ASVVLTALSNLVSALLLIYLF.

This sequence belongs to the UPF0259 family.

It localises to the cell inner membrane. In Serratia proteamaculans (strain 568), this protein is UPF0259 membrane protein Spro_2675.